Here is a 547-residue protein sequence, read N- to C-terminus: Glucose-6-phosphate isomerase 1 (547 aa).

The active-site Proton donor is E353. Residues H384 and K512 contribute to the active site.

The protein belongs to the GPI family.

The protein resides in the cytoplasm. It catalyses the reaction alpha-D-glucose 6-phosphate = beta-D-fructose 6-phosphate. Its pathway is carbohydrate biosynthesis; gluconeogenesis. The protein operates within carbohydrate degradation; glycolysis; D-glyceraldehyde 3-phosphate and glycerone phosphate from D-glucose: step 2/4. In terms of biological role, catalyzes the reversible isomerization of glucose-6-phosphate to fructose-6-phosphate. The protein is Glucose-6-phosphate isomerase 1 of Chromobacterium violaceum (strain ATCC 12472 / DSM 30191 / JCM 1249 / CCUG 213 / NBRC 12614 / NCIMB 9131 / NCTC 9757 / MK).